Here is a 752-residue protein sequence, read N- to C-terminus: Probable cell surface ferric reductase kap2 (752 aa).

Residues 40-60 (GKYGLGWVYFSVILLAISTII) traverse the membrane as a helical segment. 2 N-linked (GlcNAc...) asparagine glycosylation sites follow: N118 and N133. Helical transmembrane passes span 157–177 (IGFP…FVTL) and 195–215 (PPLA…IIAL). Positions 201-348 (AGMIAVAMIP…WATVAIWMLS (148 aa)) constitute a Ferric oxidoreductase domain. Heme-binding residues include H237 and H251. A run of 3 helical transmembrane segments spans residues 241 to 261 (GYLC…TPIW), 281 to 301 (GTGW…LPIL), and 306 to 326 (YELF…MIFW). Heme contacts are provided by H313 and H327. Residues 331–351 (FLASWDYLWATVAIWMLSYAV) traverse the membrane as a helical segment. The FAD-binding FR-type domain maps to 349 to 475 (YAVRLFYVNW…EGPYGGMKRD (127 aa)). N357 carries N-linked (GlcNAc...) asparagine glycosylation. Residue 467 to 470 (GPYG) coordinates NADP(+). A helical membrane pass occupies residues 482-502 (VVFFAGGSGITATASHLLNLI). N627 is a glycosylation site (N-linked (GlcNAc...) asparagine). 714–715 (CG) is an NADP(+) binding site.

This sequence belongs to the ferric reductase (FRE) family. FAD is required as a cofactor. The cofactor is heme.

The protein resides in the cell membrane. It catalyses the reaction 2 a Fe(II)-siderophore + NADP(+) + H(+) = 2 a Fe(III)-siderophore + NADPH. Functionally, probable cell surface ferric reductase that acts as a negative regulatory factor of growth and development. Involved in kojic acid production through the regulation of kojA expression. This Aspergillus oryzae (strain ATCC 42149 / RIB 40) (Yellow koji mold) protein is Probable cell surface ferric reductase kap2.